The following is a 181-amino-acid chain: Protein GrpE (181 aa).

Positions 1-12 are enriched in polar residues; the sequence is MENTQENPTTPS. The interval 1–33 is disordered; sequence MENTQENPTTPSAEDIGSEKQAAQGAAPAAEAA. The span at 21 to 33 shows a compositional bias: low complexity; it reads QAAQGAAPAAEAA.

The protein belongs to the GrpE family. In terms of assembly, homodimer.

It is found in the cytoplasm. Participates actively in the response to hyperosmotic and heat shock by preventing the aggregation of stress-denatured proteins, in association with DnaK and GrpE. It is the nucleotide exchange factor for DnaK and may function as a thermosensor. Unfolded proteins bind initially to DnaJ; upon interaction with the DnaJ-bound protein, DnaK hydrolyzes its bound ATP, resulting in the formation of a stable complex. GrpE releases ADP from DnaK; ATP binding to DnaK triggers the release of the substrate protein, thus completing the reaction cycle. Several rounds of ATP-dependent interactions between DnaJ, DnaK and GrpE are required for fully efficient folding. This Burkholderia cenocepacia (strain HI2424) protein is Protein GrpE.